A 273-amino-acid polypeptide reads, in one-letter code: Large ribosomal subunit protein uL2c (273 aa).

Residues Met-223–Lys-273 are disordered.

The protein belongs to the universal ribosomal protein uL2 family. Part of the 50S ribosomal subunit.

It localises to the plastid. The protein resides in the chloroplast. The sequence is that of Large ribosomal subunit protein uL2c (rpl2) from Calycanthus floridus var. glaucus (Eastern sweetshrub).